The chain runs to 170 residues: Lipoprotein signal peptidase (170 aa).

4 consecutive transmembrane segments (helical) span residues 11-31 (LGWL…KAHF), 41-61 (IVVI…AAFS), 69-89 (WQRW…VVWL), and 95-115 (DDTW…GNLY). Residues aspartate 125 and aspartate 144 contribute to the active site. The chain crosses the membrane as a helical span at residues 136 to 156 (YFPAFNFADSAITVGAIMLAL).

Belongs to the peptidase A8 family.

It localises to the cell inner membrane. It catalyses the reaction Release of signal peptides from bacterial membrane prolipoproteins. Hydrolyzes -Xaa-Yaa-Zaa-|-(S,diacylglyceryl)Cys-, in which Xaa is hydrophobic (preferably Leu), and Yaa (Ala or Ser) and Zaa (Gly or Ala) have small, neutral side chains.. Its pathway is protein modification; lipoprotein biosynthesis (signal peptide cleavage). Functionally, this protein specifically catalyzes the removal of signal peptides from prolipoproteins. The sequence is that of Lipoprotein signal peptidase from Pseudomonas fluorescens.